The sequence spans 177 residues: R-phycoerythrin beta chain (177 aa).

Positions 50 and 61 each coordinate phycourobilin. Asn-72 is modified (N4-methylasparagine). The (2R,3E)-phycoerythrobilin site is built by Cys-82 and Cys-158.

It belongs to the phycobiliprotein family. In terms of assembly, heterodimer of an alpha and a beta chain. Post-translationally, contains two covalently linked phycoerythrobilin chromophores and one covalently linked phycourobilin chromophore.

Its subcellular location is the plastid. It localises to the chloroplast thylakoid membrane. Light-harvesting photosynthetic bile pigment-protein from the phycobiliprotein complex. This Pyropia yezoensis (Susabi-nori) protein is R-phycoerythrin beta chain (cpeB).